The chain runs to 209 residues: Uracil phosphoribosyltransferase (209 aa).

5-phospho-alpha-D-ribose 1-diphosphate is bound by residues Arg79, Arg104, and 131-139 (DPMLATGNS). Uracil contacts are provided by residues Ile194 and 199–201 (GDA). Asp200 serves as a coordination point for 5-phospho-alpha-D-ribose 1-diphosphate.

Belongs to the UPRTase family. The cofactor is Mg(2+).

It carries out the reaction UMP + diphosphate = 5-phospho-alpha-D-ribose 1-diphosphate + uracil. It functions in the pathway pyrimidine metabolism; UMP biosynthesis via salvage pathway; UMP from uracil: step 1/1. With respect to regulation, allosterically activated by GTP. Catalyzes the conversion of uracil and 5-phospho-alpha-D-ribose 1-diphosphate (PRPP) to UMP and diphosphate. The polypeptide is Uracil phosphoribosyltransferase (Rhizobium leguminosarum bv. trifolii (strain WSM2304)).